Here is a 478-residue protein sequence, read N- to C-terminus: Serine hydroxymethyltransferase, cytosolic (478 aa).

N6-(pyridoxal phosphate)lysine is present on Lys251.

This sequence belongs to the SHMT family. As to quaternary structure, homotetramer. Identified in complex with FAM175B and the other subunits of the BRISC complex, at least composed of FAM175B/ABRO1, BRCC3/BRCC36, BABAM2 and BABAM1/NBA1. Requires pyridoxal 5'-phosphate as cofactor.

The protein resides in the cytoplasm. The catalysed reaction is (6R)-5,10-methylene-5,6,7,8-tetrahydrofolate + glycine + H2O = (6S)-5,6,7,8-tetrahydrofolate + L-serine. It participates in one-carbon metabolism; tetrahydrofolate interconversion. Interconversion of serine and glycine. The chain is Serine hydroxymethyltransferase, cytosolic (Shmt1) from Mus musculus (Mouse).